Here is a 205-residue protein sequence, read N- to C-terminus: ATP-dependent Clp protease proteolytic subunit (205 aa).

Ser108 acts as the Nucleophile in catalysis. Residue His133 is part of the active site.

It belongs to the peptidase S14 family. As to quaternary structure, fourteen ClpP subunits assemble into 2 heptameric rings which stack back to back to give a disk-like structure with a central cavity, resembling the structure of eukaryotic proteasomes.

It is found in the cytoplasm. The catalysed reaction is Hydrolysis of proteins to small peptides in the presence of ATP and magnesium. alpha-casein is the usual test substrate. In the absence of ATP, only oligopeptides shorter than five residues are hydrolyzed (such as succinyl-Leu-Tyr-|-NHMec, and Leu-Tyr-Leu-|-Tyr-Trp, in which cleavage of the -Tyr-|-Leu- and -Tyr-|-Trp bonds also occurs).. Functionally, cleaves peptides in various proteins in a process that requires ATP hydrolysis. Has a chymotrypsin-like activity. Plays a major role in the degradation of misfolded proteins. The protein is ATP-dependent Clp protease proteolytic subunit of Alcanivorax borkumensis (strain ATCC 700651 / DSM 11573 / NCIMB 13689 / SK2).